A 364-amino-acid chain; its full sequence is tRNA 2-selenouridine synthase (364 aa).

The Rhodanese domain occupies 15–138; sequence FVNDTPLMDM…LRRFLIETID (124 aa). Catalysis depends on Cys-98, which acts as the S-selanylcysteine intermediate.

It belongs to the SelU family. Monomer.

It catalyses the reaction 5-methylaminomethyl-2-thiouridine(34) in tRNA + selenophosphate + (2E)-geranyl diphosphate + H2O + H(+) = 5-methylaminomethyl-2-selenouridine(34) in tRNA + (2E)-thiogeraniol + phosphate + diphosphate. The catalysed reaction is 5-methylaminomethyl-2-thiouridine(34) in tRNA + (2E)-geranyl diphosphate = 5-methylaminomethyl-S-(2E)-geranyl-thiouridine(34) in tRNA + diphosphate. It carries out the reaction 5-methylaminomethyl-S-(2E)-geranyl-thiouridine(34) in tRNA + selenophosphate + H(+) = 5-methylaminomethyl-2-(Se-phospho)selenouridine(34) in tRNA + (2E)-thiogeraniol. The enzyme catalyses 5-methylaminomethyl-2-(Se-phospho)selenouridine(34) in tRNA + H2O = 5-methylaminomethyl-2-selenouridine(34) in tRNA + phosphate. Its function is as follows. Involved in the post-transcriptional modification of the uridine at the wobble position (U34) of tRNA(Lys), tRNA(Glu) and tRNA(Gln). Catalyzes the conversion of 2-thiouridine (S2U-RNA) to 2-selenouridine (Se2U-RNA). Acts in a two-step process involving geranylation of 2-thiouridine (S2U) to S-geranyl-2-thiouridine (geS2U) and subsequent selenation of the latter derivative to 2-selenouridine (Se2U) in the tRNA chain. This is tRNA 2-selenouridine synthase from Photobacterium profundum (strain SS9).